Consider the following 440-residue polypeptide: Cysteine proteinase (440 aa).

The first 60 residues, 1–60, serve as a signal peptide directing secretion; it reads MYSSSVVSNPNERLVNNRVENDLESSDDTLSTQAKPVSRLLTRKLLLGVVVLFFLAGVSV. Positions 61-229 are cleaved as a propeptide — activation peptide; sequence VSYFLFSKYK…DEDVDLAKLT (169 aa). Residues 166–182 form an involved in processing to yield active enzymes region; it reads VKGINRFSDLTEREFYK. An N-linked (GlcNAc...) asparagine glycan is attached at Asn-206. Cys-250 and Cys-291 are oxidised to a cystine. Residues Cys-253, His-382, and Asn-404 contribute to the active site.

Belongs to the peptidase C1 family.

The protein is Cysteine proteinase of Theileria parva (East coast fever infection agent).